The following is a 315-amino-acid chain: Homoserine kinase (315 aa).

Position 91–101 (91–101 (PIGSGLGSSAS)) interacts with ATP.

Belongs to the GHMP kinase family. Homoserine kinase subfamily.

It localises to the cytoplasm. It carries out the reaction L-homoserine + ATP = O-phospho-L-homoserine + ADP + H(+). The protein operates within amino-acid biosynthesis; L-threonine biosynthesis; L-threonine from L-aspartate: step 4/5. Catalyzes the ATP-dependent phosphorylation of L-homoserine to L-homoserine phosphate. The sequence is that of Homoserine kinase from Buchnera aphidicola subsp. Cinara cedri (strain Cc).